The following is a 689-amino-acid chain: Glycine--tRNA ligase beta subunit (689 aa).

The protein belongs to the class-II aminoacyl-tRNA synthetase family. As to quaternary structure, tetramer of two alpha and two beta subunits.

The protein localises to the cytoplasm. The enzyme catalyses tRNA(Gly) + glycine + ATP = glycyl-tRNA(Gly) + AMP + diphosphate. The protein is Glycine--tRNA ligase beta subunit of Glaesserella parasuis serovar 5 (strain SH0165) (Haemophilus parasuis).